The sequence spans 872 residues: Valine--tRNA ligase (872 aa).

Residues 49–59 (PNVTGILHIGH) carry the 'HIGH' region motif. The 'KMSKS' region motif lies at 531–535 (KMSKS). Lys-534 is a binding site for ATP. Residues 810–871 (PLIARLKKQL…IQQELDLLEQ (62 aa)) are a coiled coil.

The protein belongs to the class-I aminoacyl-tRNA synthetase family. ValS type 1 subfamily. Monomer.

Its subcellular location is the cytoplasm. It carries out the reaction tRNA(Val) + L-valine + ATP = L-valyl-tRNA(Val) + AMP + diphosphate. In terms of biological role, catalyzes the attachment of valine to tRNA(Val). As ValRS can inadvertently accommodate and process structurally similar amino acids such as threonine, to avoid such errors, it has a 'posttransfer' editing activity that hydrolyzes mischarged Thr-tRNA(Val) in a tRNA-dependent manner. In Helicobacter pylori (strain J99 / ATCC 700824) (Campylobacter pylori J99), this protein is Valine--tRNA ligase.